The primary structure comprises 156 residues: MATKIRLKRMGKKFYAVYRVVVMDSRTKRDGRAIEEIGLYNPNTQPSTIEIKSDRAQYWLGVGAQPTDQVLNLLKITGDWQKFKGLKGAEGTLKTAAAKPEAAVLVEEAENKAQKLKAAKAEAAAKAAEAETPAEVQHDDEKVELADVEESAPESV.

Positions 124–135 (AAKAAEAETPAE) are enriched in low complexity. Residues 124–156 (AAKAAEAETPAEVQHDDEKVELADVEESAPESV) form a disordered region. A compositionally biased stretch (basic and acidic residues) spans 136 to 145 (VQHDDEKVEL). Acidic residues predominate over residues 146–156 (ADVEESAPESV).

It belongs to the bacterial ribosomal protein bS16 family.

This is Small ribosomal subunit protein bS16 from Bifidobacterium animalis subsp. lactis (strain AD011).